The following is a 265-amino-acid chain: MKPTILLYDSGMGGLTIYDAIRQTLPNAHYLYCFDNAYFPYSERSENVLIEQAVKIVQKIAEKYPLDMVVVACNTASTVVLPALREKFAFPIVGTVPAIKPAAAISQTKTIGLLATKGTVERPYVAELIEKYAKDCIVEKIGTTTLVELVEEKIRTGNVDQDRLSKVVAEWQTHPTLDTVILGCTHFPLVKQELQQLLPNVKYFIDPGNGIANRVSALLSESVPEEPEQNKENIAFCTKIDEEFFKREVIMQQWGFKRLELLNFL.

Residues 9-10 and 41-42 each bind substrate; these read DS and YS. Residue C73 is the Proton donor/acceptor of the active site. Residue 74–75 participates in substrate binding; sequence NT. C184 (proton donor/acceptor) is an active-site residue. Position 185–186 (185–186) interacts with substrate; the sequence is TH.

Belongs to the aspartate/glutamate racemases family.

The catalysed reaction is L-glutamate = D-glutamate. Its pathway is cell wall biogenesis; peptidoglycan biosynthesis. In terms of biological role, provides the (R)-glutamate required for cell wall biosynthesis. This Actinobacillus pleuropneumoniae serotype 5b (strain L20) protein is Glutamate racemase.